We begin with the raw amino-acid sequence, 32 residues long: Cyclotide Hyfl-B (32 aa).

Positions 1-32 (GSPIQCAETCFIGKCYTEELGCTCTAFLCMKN) form a cross-link, cyclopeptide (Gly-Asn). 3 disulfide bridges follow: Cys6–Cys22, Cys10–Cys24, and Cys15–Cys29.

Belongs to the cyclotide family. Moebius subfamily. Post-translationally, this is a cyclic peptide.

Probably participates in a plant defense mechanism. In Hybanthus floribundus (Greenviolet), this protein is Cyclotide Hyfl-B.